The primary structure comprises 271 residues: 2-aminophenol 1,6-dioxygenase alpha subunit (271 aa).

It belongs to the LigB/MhpB extradiol dioxygenase family. As to quaternary structure, heterotetramer of 2 alpha and 2 beta subunits.

Its function is as follows. Component of the 2-aminophenol 1,6-dioxygenase complex that catalyzes the ring fission of 2-aminophenol to produce 2-aminomuconic 6-semialdehyde. AmnA seems to have a role in the stability of the complex. This chain is 2-aminophenol 1,6-dioxygenase alpha subunit (amnA), found in Pseudomonas sp.